The following is a 128-amino-acid chain: Large ribosomal subunit protein bL17 (128 aa).

Belongs to the bacterial ribosomal protein bL17 family. In terms of assembly, part of the 50S ribosomal subunit. Contacts protein L32.

The chain is Large ribosomal subunit protein bL17 from Streptococcus mutans serotype c (strain ATCC 700610 / UA159).